We begin with the raw amino-acid sequence, 1868 residues long: MARWIPTKRQKYGVAIYNYNASQDVELSLQIGDTVHILEMYEGWYRGYALQNRSKKGIFPETYIHLKEATVEDGGQHETVIPGELPLVQELTNTLREWAVIWRKLYVNNKVTLFRQLQQMTYSLIEWRSQILSGTLPKDELAELKKKVTAKIDHGNRMLGLDLVVRDDNGNILDPDETSTVALFRAHEVASKRIEEKIQEEKSILQNLDLRGQAIFSTVHTYGLYVNFKNFVCNIGEDAELFIALYDPDQSTFISENYLIRWGSNGMPKEIEKLNNLQAVFTDLSSTDLIRPRISLVCQIVRVGRMELKEGKKHTCGLRRPFGVAVMDISDIVHGKVDDEEKQHFIPFQQIAMETYIRQRQLIMSPLITSHVIGENEPLTSVLNKVIAAKEVNHKGQGLWVSLKLLPGDLTQVQKNFSHLVDRSTAIARKMGFPEIILPGDVRNDIYVTLIHGEFDKGKKKTPKNVEVTMSVFDEEGNLLEKAIHPGAGYEGVSEYKSVVYYQVKQPCWYETVKVFIAIEEVTRCHIRFTFRHRSSQESRDKSERAFGVAFVKLMNADGTTLQDGRHDLVVYKGDNKKMEDAKYYLTLPGTKAELEEKELQASKNPSVFTPSKDSTKDSFQIATLICSTKLTQNVDLLGLLNWRSNSQNIKHNLKKLMEVDGGEIVKFLQDTLDALFNIMMEMSDNETYDFLVFDALVFIISLIGDIKFQHFNPVLETYIYKHFSATLAHVKLSKVLNFYVANAEDPSKTELLFAALKALKYLFRFIIQSRVLYLRFYGQSEDGDEFNDSIRQLFLAFNTLMDRPLEEAVKIKGAALKYLPSIINDVKLVFDPMELSVLFCKFIQSIPDNQLVRQKLNCMTKIVESSLFQQAECREVLLPLLTDQLSGQLDDHSTKPDHEASSQLLSNILEVLDRTDVGPTSAHVQLIMERLLRRINRTVIGMSRQSPHIGSFVACMIAVLRQMEDSHYSHYISTFKTRQDIIDFLMETFIMFKDLIGKNVYAKDWMVMNMTQNRVFLRAINQFAEVLTKSFMDQASFELQLWNNYFHLAVAFLTHESLQLETFSEAKRNKIVKKYGDMRKEIGFRIRDMWYNLGPHKIKFIPSMVGPILEVTLTPEVELRKATIPIFFDMMQCEFNLSGNGNFHMFENELITKLDQEVEGGRGDEQYKVLLEKLLLEHCRKHKYLANSGEAFAFLVSSLLENLLDYRTIIIHDESKENRMSCTVNVLNFYKDKKREDIYIRYLYKLRDLHRDCENYTEAAYTLLLHAELLQWSDKPCVPHLLQRDSYYVYTQQELKEKLYQEIISYFDKGKMWEKAIKLSKELAETYESKVFDYEGLGSLLKKRALFYENIIKAMRPQPEYFAVGYYGQGFPSFLRNKIFIYRGKEYERREDFSLRLLTQFPNAEKMTSTTPPGEDIKSSPKQYLQCFTVKPVMSLPPSYKDKPVPEQILNYYRANEVQQFSYSRPFRKGEKDPENEFATMWIERTTYRTAYTFPGILKWFEAKEISVEEISPLENAIETMELTNERVSNCVQQHAWDHSLSVHPLSMLLSGIVDPAVMGGFSNYEKAFFTEKYLQEHPEDQEKVELLKRLIALQIPLLTEGIRIHGEKLTEQLKPLHARLSSCFRELKEKVEKLYGVITLPPSMTERKPSRAGSMVLPYILSSTLRRLSVTSVASSVISTSSNSSDNASSRPGSDGSILEPLFERRASSGARVEDLPPKEDSENRISKFKRKDWNLSKSQVIAEKAPEPDVMSPGKKTQRPKSLQLVDSRLTPFHSPSPLQSTALSPPPLTPKATRTLSSPSLQTDGLTASVPPPPPPKSKPYESSQRNSAEIAPPLPVRRDSKAPPPPPPKARKSGILSSEPGSQ.

An SH3 domain is found at 8–69 (KRQKYGVAIY…PETYIHLKEA (62 aa)). The residue at position 365 (Ser-365) is a Phosphoserine. A C2 DOCK-type domain is found at 443 to 627 (RNDIYVTLIH…DSFQIATLIC (185 aa)). N6-acetyllysine is present on Lys-818. The 412-residue stretch at 1231 to 1642 (YKDKKREDIY…VEKLYGVITL (412 aa)) folds into the DOCKER domain. Positions 1681–1692 (STSSNSSDNASS) are enriched in low complexity. 2 disordered regions span residues 1681-1730 (STSS…RISK) and 1742-1868 (QVIA…PGSQ). Over residues 1704-1728 (LFERRASSGARVEDLPPKEDSENRI) the composition is skewed to basic and acidic residues. A phosphoserine mark is found at Ser-1755, Ser-1765, Ser-1771, Ser-1784, and Ser-1788. Thr-1793 bears the Phosphothreonine mark. The span at 1796 to 1810 (ATRTLSSPSLQTDGL) shows a compositional bias: polar residues. 2 positions are modified to phosphoserine: Ser-1832 and Ser-1867.

Belongs to the DOCK family. In terms of assembly, interacts with CRK and CRKL. Interacts (via N-terminus) with tensin TNS3 (via N-terminus); the interaction increases DOCK5 guanine nucleotide exchange activity towards Rac. Interacts with ELMO1. In terms of tissue distribution, highly expressed in lens, where it predominantly localizes to anterior epithelial cells, and is weakly expressed in lens fiber (at protein level). Expressed in brain, eye, lung, spleen and kidney, but not in thymus or peripheral blood leukocytes.

Its subcellular location is the cytoplasm. The protein localises to the cell membrane. The protein resides in the cell projection. It localises to the podosome. Guanine nucleotide exchange factor (GEF) for Rho and Rac. GEF proteins activate small GTPases by exchanging bound GDP for free GTP. Along with DOCK1, mediates CRK/CRKL regulation of epithelial and endothelial cell spreading and migration on type IV collagen. The sequence is that of Dedicator of cytokinesis protein 5 from Mus musculus (Mouse).